The following is an 810-amino-acid chain: DNA gyrase subunit A (810 aa).

A Topo IIA-type catalytic domain is found at 36–502; sequence LPDVRDGLKP…EVLKTSMSDL (467 aa). Catalysis depends on Y124, which acts as the O-(5'-phospho-DNA)-tyrosine intermediate. Residues 529 to 535 carry the GyrA-box motif; sequence QGIGGKG.

The protein belongs to the type II topoisomerase GyrA/ParC subunit family. In terms of assembly, heterotetramer, composed of two GyrA and two GyrB chains. In the heterotetramer, GyrA contains the active site tyrosine that forms a transient covalent intermediate with DNA, while GyrB binds cofactors and catalyzes ATP hydrolysis.

The protein resides in the cytoplasm. The catalysed reaction is ATP-dependent breakage, passage and rejoining of double-stranded DNA.. In terms of biological role, a type II topoisomerase that negatively supercoils closed circular double-stranded (ds) DNA in an ATP-dependent manner to modulate DNA topology and maintain chromosomes in an underwound state. Negative supercoiling favors strand separation, and DNA replication, transcription, recombination and repair, all of which involve strand separation. Also able to catalyze the interconversion of other topological isomers of dsDNA rings, including catenanes and knotted rings. Type II topoisomerases break and join 2 DNA strands simultaneously in an ATP-dependent manner. In Borrelia hermsii (strain HS1 / DAH), this protein is DNA gyrase subunit A.